We begin with the raw amino-acid sequence, 336 residues long: O-methyltransferase 2 (336 aa).

The S-adenosyl-L-methionine site is built by G170, D198, N221, F222, and K237. The Proton acceptor role is filled by H241.

It belongs to the class I-like SAM-binding methyltransferase superfamily. Cation-independent O-methyltransferase family. COMT subfamily.

The catalysed reaction is (3,5-dichloro-2,4,6-trihydroxyphenyl)hexan-1-one + S-adenosyl-L-methionine = 1-(3,5-dichloro-2,6-dihydroxy-4-methoxyphenyl)hexan-1-one + S-adenosyl-L-homocysteine + H(+). This Dictyostelium discoideum (Social amoeba) protein is O-methyltransferase 2 (omt2).